Reading from the N-terminus, the 719-residue chain is Catalase-3 (719 aa).

An N-terminal signal peptide occupies residues 1-18; that stretch reads MRVNALLPLSGLIGTALA. The propeptide occupies 19–30; that stretch reads ACPFADPSALGR. Residues His102 and Asn175 contribute to the active site. Heme is bound at residue Tyr389.

This sequence belongs to the catalase family. Heme is required as a cofactor.

The catalysed reaction is 2 H2O2 = O2 + 2 H2O. Its function is as follows. Occurs in almost all aerobically respiring organisms and serves to protect cells from the toxic effects of hydrogen peroxide. The polypeptide is Catalase-3 (cat-3) (Neurospora crassa (strain ATCC 24698 / 74-OR23-1A / CBS 708.71 / DSM 1257 / FGSC 987)).